A 268-amino-acid polypeptide reads, in one-letter code: Tryptophan synthase alpha chain (268 aa).

Active-site proton acceptor residues include E49 and D60.

This sequence belongs to the TrpA family. Tetramer of two alpha and two beta chains.

The enzyme catalyses (1S,2R)-1-C-(indol-3-yl)glycerol 3-phosphate + L-serine = D-glyceraldehyde 3-phosphate + L-tryptophan + H2O. It functions in the pathway amino-acid biosynthesis; L-tryptophan biosynthesis; L-tryptophan from chorismate: step 5/5. The alpha subunit is responsible for the aldol cleavage of indoleglycerol phosphate to indole and glyceraldehyde 3-phosphate. The chain is Tryptophan synthase alpha chain from Escherichia fergusonii (strain ATCC 35469 / DSM 13698 / CCUG 18766 / IAM 14443 / JCM 21226 / LMG 7866 / NBRC 102419 / NCTC 12128 / CDC 0568-73).